The following is a 300-amino-acid chain: 5'-adenylylsulfate reductase-like 5 (300 aa).

Positions 1–23 (MDSRVSILFVCAIAVSCFTSGSA) are cleaved as a signal peptide. The Thioredoxin domain occupies 41-161 (FDLEAKCPPS…LIEFYEEATG (121 aa)). Asn-136 carries N-linked (GlcNAc...) asparagine glycosylation. A helical transmembrane segment spans residues 202 to 222 (FLVLSLLFICLQMAILVFPIA).

It is found in the membrane. The protein is 5'-adenylylsulfate reductase-like 5 (APRL5) of Arabidopsis thaliana (Mouse-ear cress).